Here is a 1273-residue protein sequence, read N- to C-terminus: Protein sax-3 (1273 aa).

A signal peptide spans 1-23; that stretch reads MFNRKTLLCTILLVLQAVIRSFC. 5 consecutive Ig-like C2-type domains span residues 31–127, 133–222, 227–312, 317–411, and 425–511; these read PVII…GSLK, EDFR…ARLS, PKFE…AHLR, PSFQ…LKVT, and PTIE…ASLT. Intrachain disulfides connect C52–C110, C154–C205, C248–C296, C338–C393, and C446–C495. 3 consecutive Fibronectin type-III domains span residues 533-628, 653-750, and 755-849; these read SPTQ…TSKP, QLIK…TAEA, and PPED…MNQD. Residues 874–894 form a helical membrane-spanning segment; the sequence is VPVIVIVAILIIFVVIIIAYC. The tract at residues 1033–1273 is disordered; it reads APAMPTNPVP…NNGIVTQEQT (241 aa). Residues 1037-1046 show a composition bias toward pro residues; it reads PTNPVPPEPP. Polar residues predominate over residues 1096–1105; that stretch reads QLHSSDGTGS. Over residues 1106–1115 the composition is skewed to basic and acidic residues; sequence SKERTGERRT. Over residues 1125–1136 the composition is skewed to pro residues; sequence IPPPPSNPPPPG. Residues 1145 to 1156 are compositionally biased toward polar residues; the sequence is QTATRRQLNRGS. The segment covering 1207-1222 has biased composition (acidic residues); it reads MDDDGGSSEADGENSE. Residues 1240–1273 are compositionally biased toward polar residues; sequence SASTLAHSCYGTNGTAQRFRSIPRNNGIVTQEQT.

It belongs to the immunoglobulin superfamily. ROBO/SAX3 family. Expressed in the AVG interneuron and the male-specific sensory neuron HOA.

The protein resides in the membrane. Required to confine migrating sex myoblasts to the ventral muscle quadrants during their migration through the body and for multiple aspects of sensory, motor, and interneuron axon guidance. This chain is Protein sax-3, found in Caenorhabditis elegans.